The sequence spans 542 residues: Nuclear speckle splicing regulatory protein 1 (542 aa).

The disordered stretch occupies residues 21–53 (RVLQKPSVFGSDSDDDETSVSESLQREAAKKQA). 3 positions are modified to phosphoserine: Ser-27, Ser-31, and Ser-33. A coiled-coil region spans residues 103–172 (IHNLLKAVEI…RAAALEAHLD (70 aa)). Positions 105–169 (NLLKAVEIRK…REKRAAALEA (65 aa)) are necessary for alternative splicing activity. Residues 190–516 (AVGEEAAPKS…FAKRSNEETV (327 aa)) are disordered. Glycyl lysine isopeptide (Lys-Gly) (interchain with G-Cter in SUMO2) cross-links involve residues Lys-198 and Lys-209. Residues 200–217 (SFREARTVIKEEKLRGYP) show a composition bias toward basic and acidic residues. Polar residues predominate over residues 223 to 232 (ESRPPQQSCV). The segment covering 239-256 (EAEENPDADREFDDESSE) has biased composition (acidic residues). Residues Ser-254 and Ser-255 each carry the phosphoserine modification. The segment covering 257 to 271 (DGEKRDHKVKSRGED) has biased composition (basic and acidic residues). Lys-277 is subject to N6-acetyllysine. A compositionally biased stretch (basic residues) spans 277 to 288 (KHPKHHKNRAHS). Lys-280 participates in a covalent cross-link: Glycyl lysine isopeptide (Lys-Gly) (interchain with G-Cter in SUMO2). Basic and acidic residues-rich tracts occupy residues 309–335 (RGHEHQDRQSRDQESCHKDRSHREEKS), 343–475 (SHKD…KPSH), and 485–501 (RLAEERPEKGSEQERPP). A coiled-coil region spans residues 372-413 (KREKYSSREQERDRQRNDHDRYSEKEKKRKEKEEHTKARRER). Position 443 is a phosphoserine (Ser-443).

Belongs to the NSRP1 family. As to quaternary structure, interacts (via C-terminus) with SRSF1. Interacts (via C-terminus) with SRSF2.

The protein localises to the nucleus. It is found in the nucleus speckle. In terms of biological role, RNA-binding protein that mediates pre-mRNA alternative splicing regulation. This Mus musculus (Mouse) protein is Nuclear speckle splicing regulatory protein 1 (Nsrp1).